A 260-amino-acid polypeptide reads, in one-letter code: Pyridoxine 5'-phosphate synthase (260 aa).

Asn-15 contacts 3-amino-2-oxopropyl phosphate. Residue 17–18 participates in 1-deoxy-D-xylulose 5-phosphate binding; the sequence is DH. Residue Arg-26 coordinates 3-amino-2-oxopropyl phosphate. His-51 functions as the Proton acceptor in the catalytic mechanism. Residues Arg-53 and His-58 each contribute to the 1-deoxy-D-xylulose 5-phosphate site. The active-site Proton acceptor is the Glu-78. Thr-108 contacts 1-deoxy-D-xylulose 5-phosphate. Residue His-199 is the Proton donor of the active site. 3-amino-2-oxopropyl phosphate contacts are provided by residues Gly-200 and 221-222; that span reads GH.

This sequence belongs to the PNP synthase family. As to quaternary structure, homooctamer; tetramer of dimers.

The protein localises to the cytoplasm. The enzyme catalyses 3-amino-2-oxopropyl phosphate + 1-deoxy-D-xylulose 5-phosphate = pyridoxine 5'-phosphate + phosphate + 2 H2O + H(+). It participates in cofactor biosynthesis; pyridoxine 5'-phosphate biosynthesis; pyridoxine 5'-phosphate from D-erythrose 4-phosphate: step 5/5. Functionally, catalyzes the complicated ring closure reaction between the two acyclic compounds 1-deoxy-D-xylulose-5-phosphate (DXP) and 3-amino-2-oxopropyl phosphate (1-amino-acetone-3-phosphate or AAP) to form pyridoxine 5'-phosphate (PNP) and inorganic phosphate. The chain is Pyridoxine 5'-phosphate synthase from Cupriavidus necator (strain ATCC 17699 / DSM 428 / KCTC 22496 / NCIMB 10442 / H16 / Stanier 337) (Ralstonia eutropha).